Consider the following 375-residue polypeptide: Glutamate 5-kinase (375 aa).

Lysine 17 serves as a coordination point for ATP. Substrate-binding residues include serine 57, aspartate 144, and asparagine 156. Residue 176 to 177 (TD) participates in ATP binding. The 79-residue stretch at 283–361 (KGRLWLDTGA…HQIEQILGYV (79 aa)) folds into the PUA domain.

It belongs to the glutamate 5-kinase family.

Its subcellular location is the cytoplasm. The enzyme catalyses L-glutamate + ATP = L-glutamyl 5-phosphate + ADP. It functions in the pathway amino-acid biosynthesis; L-proline biosynthesis; L-glutamate 5-semialdehyde from L-glutamate: step 1/2. Catalyzes the transfer of a phosphate group to glutamate to form L-glutamate 5-phosphate. This chain is Glutamate 5-kinase, found in Nitrosococcus oceani (strain ATCC 19707 / BCRC 17464 / JCM 30415 / NCIMB 11848 / C-107).